The following is a 416-amino-acid chain: MAIQAPKGTKDILPTESYKWHYLEDKFKNIADSYGYREIRTPVFEYTELFQRGVGETTDVVQKEMYTFLDRAGRSLTLKPEGTSPAVRAFVEGSLYNEAQPTKLFYFTPVLRYENVQKGRLREHHQFGIEAFGSREASLDAEVISLAMRIYEELGVDGIELNINSIGCSKCRKEYNDILKTFLSKQYDNICDTCKTRFHKNPMRILDCKEKSCREIVKDAPLMLHHLCDECREHFESLKMYLEGLGIGYKINPLIVRGLDYYSKTVFEIINKNITICGGGRYDYLIEEVGGPKMPAVGFGMGIERTLLTLSENGIEIPKLPYIDLYIGIIGDKARIKALTLTNKLREKNVRCEYDHMNRSVKAEMKYANKINARFTVILGENEIESGIAKFKRMEDGQQFEISLGDLSAILNLTRM.

Belongs to the class-II aminoacyl-tRNA synthetase family. As to quaternary structure, homodimer.

Its subcellular location is the cytoplasm. The catalysed reaction is tRNA(His) + L-histidine + ATP = L-histidyl-tRNA(His) + AMP + diphosphate + H(+). The sequence is that of Histidine--tRNA ligase from Clostridium kluyveri (strain NBRC 12016).